Here is a 240-residue protein sequence, read N- to C-terminus: Ribitol-5-phosphate cytidylyltransferase (240 aa).

CTP is bound by residues 8-11 (FAGG) and 81-87 (GETGQMS).

The protein belongs to the IspD/TarI cytidylyltransferase family. TarI subfamily.

It catalyses the reaction D-ribitol 5-phosphate + CTP + H(+) = CDP-L-ribitol + diphosphate. It functions in the pathway cell wall biogenesis; poly(ribitol phosphate) teichoic acid biosynthesis. Functionally, catalyzes the transfer of the cytidylyl group of CTP to D-ribitol 5-phosphate. This Streptococcus agalactiae serotype V (strain ATCC BAA-611 / 2603 V/R) protein is Ribitol-5-phosphate cytidylyltransferase.